We begin with the raw amino-acid sequence, 652 residues long: DNA ligase (652 aa).

NAD(+)-binding positions include 29 to 33 (DSEYD), 78 to 79 (SL), and Glu107. Lys109 functions as the N6-AMP-lysine intermediate in the catalytic mechanism. 4 residues coordinate NAD(+): Arg130, Glu164, Lys278, and Lys302. The Zn(2+) site is built by Cys395, Cys398, Cys413, and Cys418. Positions 577–652 (VADAALSGLT…VRDEAWLESL (76 aa)) constitute a BRCT domain.

This sequence belongs to the NAD-dependent DNA ligase family. LigA subfamily. Mg(2+) serves as cofactor. It depends on Mn(2+) as a cofactor.

It carries out the reaction NAD(+) + (deoxyribonucleotide)n-3'-hydroxyl + 5'-phospho-(deoxyribonucleotide)m = (deoxyribonucleotide)n+m + AMP + beta-nicotinamide D-nucleotide.. In terms of biological role, DNA ligase that catalyzes the formation of phosphodiester linkages between 5'-phosphoryl and 3'-hydroxyl groups in double-stranded DNA using NAD as a coenzyme and as the energy source for the reaction. It is essential for DNA replication and repair of damaged DNA. This Streptococcus pneumoniae (strain CGSP14) protein is DNA ligase.